We begin with the raw amino-acid sequence, 156 residues long: Small ribosomal subunit protein uS7 (156 aa).

It belongs to the universal ribosomal protein uS7 family. As to quaternary structure, part of the 30S ribosomal subunit. Contacts proteins S9 and S11.

Functionally, one of the primary rRNA binding proteins, it binds directly to 16S rRNA where it nucleates assembly of the head domain of the 30S subunit. Is located at the subunit interface close to the decoding center, probably blocks exit of the E-site tRNA. This Salinispora arenicola (strain CNS-205) protein is Small ribosomal subunit protein uS7.